Consider the following 330-residue polypeptide: DNA repair and recombination protein RadA (330 aa).

An ATP-binding site is contributed by 124–131 (GEFGSGKT).

The protein belongs to the eukaryotic RecA-like protein family.

Its function is as follows. Involved in DNA repair and in homologous recombination. Binds and assemble on single-stranded DNA to form a nucleoprotein filament. Hydrolyzes ATP in a ssDNA-dependent manner and promotes DNA strand exchange between homologous DNA molecules. The polypeptide is DNA repair and recombination protein RadA (Pyrobaculum neutrophilum (strain DSM 2338 / JCM 9278 / NBRC 100436 / V24Sta) (Thermoproteus neutrophilus)).